The chain runs to 141 residues: Large ribosomal subunit protein uL11 (141 aa).

It belongs to the universal ribosomal protein uL11 family. As to quaternary structure, part of the ribosomal stalk of the 50S ribosomal subunit. Interacts with L10 and the large rRNA to form the base of the stalk. L10 forms an elongated spine to which L12 dimers bind in a sequential fashion forming a multimeric L10(L12)X complex. One or more lysine residues are methylated.

Forms part of the ribosomal stalk which helps the ribosome interact with GTP-bound translation factors. The protein is Large ribosomal subunit protein uL11 of Ligilactobacillus salivarius (strain UCC118) (Lactobacillus salivarius).